Reading from the N-terminus, the 114-residue chain is Ribonuclease P protein component (114 aa).

This sequence belongs to the RnpA family. Consists of a catalytic RNA component (M1 or rnpB) and a protein subunit.

It carries out the reaction Endonucleolytic cleavage of RNA, removing 5'-extranucleotides from tRNA precursor.. Functionally, RNaseP catalyzes the removal of the 5'-leader sequence from pre-tRNA to produce the mature 5'-terminus. It can also cleave other RNA substrates such as 4.5S RNA. The protein component plays an auxiliary but essential role in vivo by binding to the 5'-leader sequence and broadening the substrate specificity of the ribozyme. In Clostridioides difficile (strain 630) (Peptoclostridium difficile), this protein is Ribonuclease P protein component.